The following is an 896-amino-acid chain: Phosphatidate phosphatase LPIN2 (896 aa).

The segment at 1–108 is N-LIP; that stretch reads MNYVGQLAGQ…LPAYLATSPI (108 aa). Ser-106 bears the Phosphoserine mark. A disordered region spans residues 120–208; it reads TPLVKSGGDE…SSNASLKEEE (89 aa). Residues 152–162 are compositionally biased toward basic residues; it reads VKKKKRRRKKY. Residues 153-158 carry the Nuclear localization signal motif; that stretch reads KKKKRR. Residues Ser-174, Ser-186, Ser-187, Ser-243, and Ser-303 each carry the phosphoserine modification. Disordered stretches follow at residues 370 to 405 and 420 to 459; these read AEAPSESKPAAKVDSPSKKKGVHKRSQHQGPDDIYL and FPKSESEPGSRQWPESDTLSGSQSPQSVGSAAADSGTECL. Residues 387-396 show a composition bias toward basic residues; sequence KKKGVHKRSQ. A compositionally biased stretch (polar residues) spans 426–448; sequence EPGSRQWPESDTLSGSQSPQSVG. Ser-566 is modified (phosphoserine). Positions 569-579 are enriched in basic and acidic residues; the sequence is KQLPESKEGKS. Residues 569-636 form a disordered region; sequence KQLPESKEGK…LSHGSTTSYK (68 aa). A compositionally biased stretch (acidic residues) spans 604-617; the sequence is SSSDEGSQELEESI. The C-LIP stretch occupies residues 635-837; the sequence is YKKSLRLSSD…RIFTVNPKGE (203 aa). The DXDXT motif signature appears at 689–693; sequence DIDGT. Positions 700 to 704 match the LXXIL motif motif; it reads LGQIL.

This sequence belongs to the lipin family. Mg(2+) serves as cofactor. Expressed in liver, lung, kidney, placenta, spleen, thymus, lymph node, prostate, testes, small intestine, and colon.

Its subcellular location is the nucleus. The protein localises to the cytoplasm. It is found in the cytosol. It localises to the endoplasmic reticulum membrane. The enzyme catalyses a 1,2-diacyl-sn-glycero-3-phosphate + H2O = a 1,2-diacyl-sn-glycerol + phosphate. Its activity is regulated as follows. Inhibited by N-ethylmaleimide. Functionally, acts as a magnesium-dependent phosphatidate phosphatase enzyme which catalyzes the conversion of phosphatidic acid to diacylglycerol during triglyceride, phosphatidylcholine and phosphatidylethanolamine biosynthesis in the endoplasmic reticulum membrane. Plays important roles in controlling the metabolism of fatty acids at different levels. Also acts as a nuclear transcriptional coactivator for PPARGC1A to modulate lipid metabolism. This is Phosphatidate phosphatase LPIN2 from Homo sapiens (Human).